The primary structure comprises 162 residues: MTIEQDLSRIALQEETLRFDAFDLSTAWVLGKLLHDLASERNLGVAIDITLHSMPVFYIALPGATPDNSNWVRRKRNMVLRYFRSSYASTLRLEKQGKTIEDNGLTGADYAASGGSFPIFVNGTGCIGAVTVSGLPQREDHNLVVEALALTLGHELHNLNLS.

The protein belongs to the UPF0303 family.

This chain is UPF0303 protein Arad_3071, found in Rhizobium rhizogenes (strain K84 / ATCC BAA-868) (Agrobacterium radiobacter).